Reading from the N-terminus, the 72-residue chain is Translation initiation factor IF-1 (72 aa).

An S1-like domain is found at 1-72 (MAKEDTLEFP…SKGRINYRFK (72 aa)).

It belongs to the IF-1 family. As to quaternary structure, component of the 30S ribosomal translation pre-initiation complex which assembles on the 30S ribosome in the order IF-2 and IF-3, IF-1 and N-formylmethionyl-tRNA(fMet); mRNA recruitment can occur at any time during PIC assembly.

The protein resides in the cytoplasm. One of the essential components for the initiation of protein synthesis. Stabilizes the binding of IF-2 and IF-3 on the 30S subunit to which N-formylmethionyl-tRNA(fMet) subsequently binds. Helps modulate mRNA selection, yielding the 30S pre-initiation complex (PIC). Upon addition of the 50S ribosomal subunit IF-1, IF-2 and IF-3 are released leaving the mature 70S translation initiation complex. This Cereibacter sphaeroides (strain ATCC 17029 / ATH 2.4.9) (Rhodobacter sphaeroides) protein is Translation initiation factor IF-1.